The primary structure comprises 796 residues: Protein translocase subunit SecA 2 (796 aa).

ATP is bound by residues Gln84, 102–106 (GEGKT), and Asp496.

The protein belongs to the SecA family. As to quaternary structure, monomer and homodimer. Part of the essential Sec protein translocation apparatus which comprises SecA, SecYEG and auxiliary proteins SecDF. Other proteins may also be involved.

The protein localises to the cell membrane. It localises to the cytoplasm. It catalyses the reaction ATP + H2O + cellular proteinSide 1 = ADP + phosphate + cellular proteinSide 2.. Functionally, part of the Sec protein translocase complex. Interacts with the SecYEG preprotein conducting channel. Has a central role in coupling the hydrolysis of ATP to the transfer of proteins into and across the cell membrane, serving as an ATP-driven molecular motor driving the stepwise translocation of polypeptide chains across the membrane. The protein is Protein translocase subunit SecA 2 of Staphylococcus haemolyticus (strain JCSC1435).